Here is an 811-residue protein sequence, read N- to C-terminus: Methionine--tRNA ligase (811 aa).

The 'HIGH' region signature appears at 11-21 (PYVNNVPHLGN). The Zn(2+) site is built by Cys142, Cys145, Cys155, and Cys158. The 'KMSKS' region signature appears at 344 to 348 (KFSKS). An ATP-binding site is contributed by Lys347. Residues 606–640 (GVSVPRTAQMPTGMNKKETDAQQKKEEREMPPPSD) are disordered. The span at 620–635 (NKKETDAQQKKEEREM) shows a compositional bias: basic and acidic residues. Residues 648-753 (FSERVVLKVA…PWALPGERAT (106 aa)) form the tRNA-binding domain.

This sequence belongs to the class-I aminoacyl-tRNA synthetase family. MetG type 1 subfamily. Homodimer. It depends on Zn(2+) as a cofactor.

It localises to the cytoplasm. It carries out the reaction tRNA(Met) + L-methionine + ATP = L-methionyl-tRNA(Met) + AMP + diphosphate. Its function is as follows. Is required not only for elongation of protein synthesis but also for the initiation of all mRNA translation through initiator tRNA(fMet) aminoacylation. In Treponema pallidum (strain Nichols), this protein is Methionine--tRNA ligase.